Here is a 499-residue protein sequence, read N- to C-terminus: Probable dipeptidase B (499 aa).

Cysteine 26 is an active-site residue.

This sequence belongs to the peptidase C69 family.

It catalyses the reaction an L-aminoacyl-L-amino acid + H2O = 2 an L-alpha-amino acid. The chain is Probable dipeptidase B (pepDB) from Streptococcus pyogenes serotype M18 (strain MGAS8232).